Here is a 247-residue protein sequence, read N- to C-terminus: 5'-nucleotidase SurE (247 aa).

The a divalent metal cation site is built by Asp-8, Asp-9, Ser-39, and Asn-91.

The protein belongs to the SurE nucleotidase family. It depends on a divalent metal cation as a cofactor.

It is found in the cytoplasm. The enzyme catalyses a ribonucleoside 5'-phosphate + H2O = a ribonucleoside + phosphate. In terms of biological role, nucleotidase that shows phosphatase activity on nucleoside 5'-monophosphates. This is 5'-nucleotidase SurE from Chromobacterium violaceum (strain ATCC 12472 / DSM 30191 / JCM 1249 / CCUG 213 / NBRC 12614 / NCIMB 9131 / NCTC 9757 / MK).